We begin with the raw amino-acid sequence, 232 residues long: MTTSLIHMANHLDASTEEISLNYVLLGHPHHERAQHHPSYMDMIKGAIQAIDNGTGSSKAAILKYIAQNYHVGENLPKVNNHLRSVLKKAVDSGDIEQTRGHGATGSFRMGKECEKNLQVGIPVQTKPMLMLKEVRQKLENISKAEKTKPSTSSMSTNKKGKPISTMKKRGVMSKKRSSKNKMAPKAKSHGLKKKGPATKSSGLVHKAAGAKNEAAPTTKMELRTGTRKSYC.

The H15 domain occupies 36–112; it reads HHPSYMDMIK…GATGSFRMGK (77 aa). The tract at residues 142–232 is disordered; it reads ISKAEKTKPS…LRTGTRKSYC (91 aa). Residues 159-197 show a composition bias toward basic residues; it reads KKGKPISTMKKRGVMSKKRSSKNKMAPKAKSHGLKKKGP.

This sequence belongs to the histone H1/H5 family.

It localises to the nucleus. The protein localises to the chromosome. This chain is Histone H1.X (hil-1), found in Caenorhabditis elegans.